The chain runs to 36 residues: U14-ctenitoxin-Co1b (36 aa).

As to expression, expressed by the venom gland.

The protein localises to the secreted. Functionally, not toxic to mice by intracerebroventricular injection. This Ctenus ornatus (Brazilian spider) protein is U14-ctenitoxin-Co1b.